The following is a 306-amino-acid chain: Putative type I specificity subunit S.MpnORF285P (306 aa).

The protein belongs to the type-I restriction system S methylase family. As to quaternary structure, the methyltransferase is composed of M and S polypeptides.

In terms of biological role, the specificity (S) subunit of a type I methyltransferase (MTase); this subunit dictates DNA sequence specificity. The single R subunit has multiple frameshifts and is probably not expressed. This is Putative type I specificity subunit S.MpnORF285P from Mycoplasma pneumoniae (strain ATCC 29342 / M129 / Subtype 1) (Mycoplasmoides pneumoniae).